We begin with the raw amino-acid sequence, 178 residues long: Large ribosomal subunit protein uL6 (178 aa).

It belongs to the universal ribosomal protein uL6 family. Part of the 50S ribosomal subunit.

Its function is as follows. This protein binds to the 23S rRNA, and is important in its secondary structure. It is located near the subunit interface in the base of the L7/L12 stalk, and near the tRNA binding site of the peptidyltransferase center. The protein is Large ribosomal subunit protein uL6 of Micrococcus luteus (Micrococcus lysodeikticus).